Consider the following 1368-residue polypeptide: Cingulin (1368 aa).

The tract at residues 9–378 (MADQHIPVGQ…KQQRTVQSEF (370 aa)) is interaction with TJP3/ZO3 and myosin. The tract at residues 9 to 435 (MADQHIPVGQ…EKLPSLQVQP (427 aa)) is head. The ZIM motif lies at 41 to 55 (QDSYGVAVRVQGIDG). 5 disordered regions span residues 71–264 (FGVQ…TKPL), 278–312 (GQVR…DTAD), 1053–1080 (SRKE…NSSR), 1163–1183 (NRSR…RSRG), and 1308–1368 (QQEI…TSSC). Residues 83 to 97 (NASNTSPPNYQNYSS) are compositionally biased toward polar residues. Positions 101 to 294 (GPSRSISSES…ARRSQALKDE (194 aa)) are interaction with F-actin. 2 stretches are compositionally biased toward low complexity: residues 116 to 132 (PYGS…YSSA) and 200 to 211 (SQSSRDSAWSRS). Residues 150 to 295 (SSLPRPLQAS…RRSQALKDER (146 aa)) form an interaction with TJP2/ZO2 region. Positions 228-256 (SATSQQSTSVSNKTKKNGLSTSSPSNQSN) are enriched in polar residues. A compositionally biased stretch (basic and acidic residues) spans 290-312 (ALKDERKRSQSLDGRKNYHDTAD). The interval 377-1368 (EFQLKSTPDL…TESNLQTSSC (992 aa)) is interaction with myosin. The stretch at 436–1330 (GEDTISLGSQ…VMEKESKRKP (895 aa)) forms a coiled coil. Residues 1320-1338 (KVMEKESKRKPIRPAHDDD) are compositionally biased toward basic and acidic residues. The segment at 1331–1368 (IRPAHDDDLSSDGEFGGPYDPSSITSLLTESNLQTSSC) is tail. Residues 1352–1368 (SSITSLLTESNLQTSSC) are compositionally biased toward polar residues.

This sequence belongs to the cingulin family. Parallel homodimer. Interacts with TJP1/ZO1 and TJP2/ZO2 in vivo, and TJP3/ZO3, myosin and OCLN in vitro, possibly directly. Acts as an F-actin bundling protein in vitro. As to expression, localized on the cytoplasmic face of tight junctions of polarized epithelia and some endothelia.

It is found in the cell junction. Its subcellular location is the tight junction. Functionally, probably plays a role in the formation and regulation of the tight junction (TJ) paracellular permeability barrier, possibly by linking ZO proteins to the actomyosin cytoskeleton. This chain is Cingulin, found in Xenopus laevis (African clawed frog).